The following is a 342-amino-acid chain: MQPPPMRERQRWRPEEDAILLAYVRQYGPREWSLVSQRMNRPLHRDAKSCLERWKNYLRPGIKKGSLTDDEQRLVIRLQAKHGNKWKKIAAEVPGRTAKRLGKWWEVFKEKQQRELRDRDRRRLPPPLDGDERGCAGGRYDWLLEDFADKLVNDHHRRMMAAPILPPWMSSSPSSSSSPSVTLSLASAAVAPAPAAPPPTWGGGGGGEVVVAELMECCREMEEGQRAWAAHRKEAAWRMKRVEMQLETERACRRREATEEFEAKMRALREEQAAAVERVEAEYREKMAGLRRDAEAKEQKMAEQWAAKHARLAKFLDQVAACRRWPPVEINGGGGGGPGGGR.

HTH myb-type domains follow at residues 1 to 58 and 59 to 113; these read MQPP…KNYL and RPGI…EKQQ. 2 consecutive DNA-binding regions (H-T-H motif) follow at residues 32–58 and 86–109; these read WSLV…KNYL and WKKI…EVFK. A coiled-coil region spans residues 253–304; that stretch reads RRREATEEFEAKMRALREEQAAAVERVEAEYREKMAGLRRDAEAKEQKMAEQ.

It is found in the nucleus. In terms of biological role, transcription factor required for normal cell differentiation. May interact with other proteins to repress the knox homeobox genes. In Oryza sativa subsp. japonica (Rice), this protein is Protein rough sheath 2 homolog (RS2).